Consider the following 164-residue polypeptide: Putative histone H2B type 2-D (164 aa).

A compositionally biased stretch (low complexity) spans methionine 1–lysine 12. The interval methionine 1–serine 33 is disordered. The residue at position 2 (proline 2) is an N-acetylproline. Residue lysine 6 is modified to N6-(2-hydroxyisobutyryl)lysine; alternate. 2 positions are modified to N6-(beta-hydroxybutyryl)lysine; alternate: lysine 6 and lysine 12. N6-acetyllysine; alternate occurs at positions 6, 12, and 13. Residue lysine 6 is modified to N6-butyryllysine; alternate. N6-crotonyllysine; alternate is present on residues lysine 6, lysine 12, and lysine 13. 2 positions are modified to N6-lactoyllysine; alternate: lysine 6 and lysine 12. Residue lysine 6 forms a Glycyl lysine isopeptide (Lys-Gly) (interchain with G-Cter in SUMO2); alternate linkage. Residue lysine 13 is modified to N6-(2-hydroxyisobutyryl)lysine; alternate. Phosphoserine; by STK4/MST1 is present on serine 15. N6-acetyllysine; alternate is present on residues lysine 16, lysine 17, lysine 21, and lysine 24. N6-crotonyllysine; alternate occurs at positions 16, 17, 21, and 24. Residues lysine 16, lysine 17, lysine 21, and lysine 24 each carry the N6-lactoyllysine; alternate modification. 2 positions are modified to N6-(beta-hydroxybutyryl)lysine; alternate: lysine 17 and lysine 21. An N6-glutaryllysine; alternate modification is found at lysine 17. Lysine 21 and lysine 24 each carry N6-(2-hydroxyisobutyryl)lysine; alternate. Lysine 21 bears the N6-butyryllysine; alternate mark. A Glycyl lysine isopeptide (Lys-Gly) (interchain with G-Cter in SUMO2); alternate cross-link involves residue lysine 21. Residue lysine 25 is modified to N6-(2-hydroxyisobutyryl)lysine. Lysine 35 bears the N6-(2-hydroxyisobutyryl)lysine; alternate mark. Lysine 35 carries the post-translational modification N6-(beta-hydroxybutyryl)lysine; alternate. Lysine 35 is subject to N6-crotonyllysine; alternate. N6-glutaryllysine; alternate is present on lysine 35. Lysine 35 carries the post-translational modification N6-succinyllysine; alternate. Lysine 35 participates in a covalent cross-link: Glycyl lysine isopeptide (Lys-Gly) (interchain with G-Cter in ubiquitin); alternate. Serine 37 carries the post-translational modification Phosphoserine; by AMPK. 3 positions are modified to N6-(2-hydroxyisobutyryl)lysine; alternate: lysine 44, lysine 47, and lysine 58. Position 44 is an N6-lactoyllysine; alternate (lysine 44). N6-glutaryllysine; alternate is present on residues lysine 44 and lysine 47. The residue at position 47 (lysine 47) is an N6-methyllysine; alternate. An N6,N6-dimethyllysine; alternate modification is found at lysine 58. The residue at position 80 (arginine 80) is a Dimethylated arginine. The residue at position 86 (lysine 86) is an N6-(2-hydroxyisobutyryl)lysine; alternate. Lysine 86 carries the post-translational modification N6-(beta-hydroxybutyryl)lysine; alternate. Position 86 is an N6-acetyllysine; alternate (lysine 86). Lysine 86 is subject to N6-lactoyllysine; alternate. Position 86 is an N6,N6,N6-trimethyllysine; alternate (lysine 86). An omega-N-methylarginine mark is found at arginine 87 and arginine 93. The tract at residues proline 111–serine 140 is disordered.

It belongs to the histone H2B family. In terms of assembly, the nucleosome is a histone octamer containing two molecules each of H2A, H2B, H3 and H4 assembled in one H3-H4 heterotetramer and two H2A-H2B heterodimers. The octamer wraps approximately 147 bp of DNA. Phosphorylation at Ser-37 (H2BS36ph) by AMPK in response to stress promotes transcription. Phosphorylated on Ser-15 (H2BS14ph) by STK4/MST1 during apoptosis; which facilitates apoptotic chromatin condensation. Also phosphorylated on Ser-15 in response to DNA double strand breaks (DSBs), and in correlation with somatic hypermutation and immunoglobulin class-switch recombination. In terms of processing, crotonylation (Kcr) is specifically present in male germ cells and marks testis-specific genes in post-meiotic cells, including X-linked genes that escape sex chromosome inactivation in haploid cells. Crotonylation marks active promoters and enhancers and confers resistance to transcriptional repressors. It is also associated with post-meiotically activated genes on autosomes. Post-translationally, lactylated in macrophages by EP300/P300 by using lactoyl-CoA directly derived from endogenous or exogenous lactate, leading to stimulates gene transcription.

Its subcellular location is the nucleus. It is found in the chromosome. Its function is as follows. Core component of nucleosome. Nucleosomes wrap and compact DNA into chromatin, limiting DNA accessibility to the cellular machineries which require DNA as a template. Histones thereby play a central role in transcription regulation, DNA repair, DNA replication and chromosomal stability. DNA accessibility is regulated via a complex set of post-translational modifications of histones, also called histone code, and nucleosome remodeling. The chain is Putative histone H2B type 2-D from Homo sapiens (Human).